A 406-amino-acid chain; its full sequence is Cysteine desulfurase (406 aa).

N6-(pyridoxal phosphate)lysine is present on Lys-226. Residue Cys-364 is the Cysteine persulfide intermediate of the active site.

Belongs to the class-V pyridoxal-phosphate-dependent aminotransferase family. Csd subfamily. Homodimer. Interacts with SufE and the SufBCD complex composed of SufB, SufC and SufD. The interaction with SufE is required to mediate the direct transfer of the sulfur atom from the S-sulfanylcysteine. Pyridoxal 5'-phosphate serves as cofactor.

It is found in the cytoplasm. The enzyme catalyses (sulfur carrier)-H + L-cysteine = (sulfur carrier)-SH + L-alanine. It carries out the reaction L-selenocysteine + AH2 = hydrogenselenide + L-alanine + A + H(+). Its pathway is cofactor biosynthesis; iron-sulfur cluster biosynthesis. Cysteine desulfurases mobilize the sulfur from L-cysteine to yield L-alanine, an essential step in sulfur metabolism for biosynthesis of a variety of sulfur-containing biomolecules. Component of the suf operon, which is activated and required under specific conditions such as oxidative stress and iron limitation. Acts as a potent selenocysteine lyase in vitro, that mobilizes selenium from L-selenocysteine. Selenocysteine lyase activity is however unsure in vivo. This is Cysteine desulfurase from Salmonella choleraesuis (strain SC-B67).